A 199-amino-acid chain; its full sequence is UPF0301 protein Anae109_0457 (199 aa).

This sequence belongs to the UPF0301 (AlgH) family.

The sequence is that of UPF0301 protein Anae109_0457 from Anaeromyxobacter sp. (strain Fw109-5).